Here is a 65-residue protein sequence, read N- to C-terminus: Hirudin-2' (65 aa).

Positions 1–3 (ITY) are interaction with thrombin active site. Cystine bridges form between Cys6-Cys14, Cys16-Cys28, and Cys22-Cys39. The disordered stretch occupies residues 39–65 (CVTGEGTPKPQSHNDGDFEEIPEEYLQ). Thr45 carries an O-linked (GalNAc...) threonine glycan. An interaction with fibrinogen-binding exosite of thrombin region spans residues 55–65 (DFEEIPEEYLQ). Acidic residues predominate over residues 55–65 (DFEEIPEEYLQ). Position 63 is a sulfotyrosine (Tyr63).

This sequence belongs to the protease inhibitor I14 (hirudin) family.

Its subcellular location is the secreted. In terms of biological role, hirudin is a potent thrombin-specific protease inhibitor. It forms a stable non-covalent complex with alpha-thrombin, thereby abolishing its ability to cleave fibrinogen. The protein is Hirudin-2' of Hirudo medicinalis (Medicinal leech).